Consider the following 723-residue polypeptide: ATP-dependent DNA helicase RRM3 (723 aa).

2 disordered regions span residues 1-31 (MFRS…SGSH) and 61-101 (DLES…DDDP). Residue Ser64 is modified to Phosphoserine. Low complexity predominate over residues 83–96 (NNSSSLFSQSQGSF). Position 254-261 (254-261 (GSAGTGKS)) interacts with ATP. A DNA-binding region spans residues 682-701 (QVYVALSRAVTMDTLQVLNF).

Belongs to the helicase family. Interacts with DEF1 and POL30.

It localises to the nucleus. The protein resides in the chromosome. The protein localises to the telomere. The catalysed reaction is Couples ATP hydrolysis with the unwinding of duplex DNA at the replication fork by translocating in the 5'-3' direction. This creates two antiparallel DNA single strands (ssDNA). The leading ssDNA polymer is the template for DNA polymerase III holoenzyme which synthesizes a continuous strand.. It catalyses the reaction ATP + H2O = ADP + phosphate + H(+). In terms of biological role, 5' to 3' DNA replicative helicase recruited to paused replisomes to promote fork progression throughout nonhistone protein-DNA complexes, naturally occurring impediments that are encountered in each S phase where replication forks pauses. Needed for normal fork progression through over 1000 discrete sites scattered throughout the genome, like rDNA, tRNA genes, centromeres, active replication origins, or transcriptional silencers. Required for timely replication of the telomere and subtelomeric DNA and for wild-type levels of telomeric silencing. Involved in regulation of Ty1 transposition and protects the genome from instability at nascent sites of retrotransposition. Involved in DNA repair during stalled replication fork, regulation of fragile sites expression and essential for genome stability. Also plays a role in mtDNA replication. Has G-quadruplex (G4) unwinding activity and can suppress G4-induced genome instability when PIF1 levels are low. The chain is ATP-dependent DNA helicase RRM3 from Saccharomyces cerevisiae (strain ATCC 204508 / S288c) (Baker's yeast).